The sequence spans 287 residues: GPN-loop GTPase 3 (287 aa).

12–17 (GAGKST) is a GTP binding site. The Gly-Pro-Asn (GPN)-loop; involved in dimer interface motif lies at 69-71 (GPN). 172-175 (SKMD) is a binding site for GTP.

The protein belongs to the GPN-loop GTPase family. Heterodimers with GPN1 or GPN2. Binds to RNA polymerase II (RNAPII).

Functionally, small GTPase required for proper nuclear import of RNA polymerase II and III (RNAPII and RNAPIII). May act at an RNAP assembly step prior to nuclear import. The sequence is that of GPN-loop GTPase 3 from Cryptococcus neoformans var. neoformans serotype D (strain B-3501A) (Filobasidiella neoformans).